The chain runs to 442 residues: ATP-dependent protease ATPase subunit HslU (442 aa).

ATP contacts are provided by residues isoleucine 18 and 60–65 (GVGKTE). The disordered stretch occupies residues 136–157 (LPKPKNDWESTETDSSSNTRQV). ATP contacts are provided by aspartate 255, glutamate 320, and arginine 392.

It belongs to the ClpX chaperone family. HslU subfamily. As to quaternary structure, a double ring-shaped homohexamer of HslV is capped on each side by a ring-shaped HslU homohexamer. The assembly of the HslU/HslV complex is dependent on binding of ATP.

It localises to the cytoplasm. Functionally, ATPase subunit of a proteasome-like degradation complex; this subunit has chaperone activity. The binding of ATP and its subsequent hydrolysis by HslU are essential for unfolding of protein substrates subsequently hydrolyzed by HslV. HslU recognizes the N-terminal part of its protein substrates and unfolds these before they are guided to HslV for hydrolysis. In Shewanella baltica (strain OS185), this protein is ATP-dependent protease ATPase subunit HslU.